The chain runs to 375 residues: Sulfite efflux pump SSU1 (375 aa).

The Cytoplasmic portion of the chain corresponds to 1 to 25 (MPSGSGFHNIEEAGEKARKRDDWIA). A helical transmembrane segment spans residues 26–46 (ISNFHPGWFSVNMGTGITAIL). Topologically, residues 47–59 (LQNLPYQFPGLHY) are extracellular. Residues 60–80 (IAVVLFILNVIIFFLFLTISI) traverse the membrane as a helical segment. Topologically, residues 81–101 (TRYCLWPDKFKAMLAHPAHSM) are cytoplasmic. A helical membrane pass occupies residues 102–122 (LLGTFPMGFATIINCIVFICV). Residues 123-135 (PVWGEWASRFAWG) are Extracellular-facing. Residues 136–156 (LWWIDAAVSVAICYFVPFMLM) form a helical membrane-spanning segment. Topologically, residues 157 to 167 (TKHTSSLETMT) are cytoplasmic. A helical transmembrane segment spans residues 168–188 (AAWLLPIVAPVVAAASGGVVA). Residues 189–200 (DSLQNDTHALIT) lie on the Extracellular side of the membrane. N-linked (GlcNAc...) asparagine glycosylation occurs at N193. The helical transmembrane segment at 201–221 (ILVCYAMWGSAVPLAMVILVI) threads the bilayer. Topologically, residues 222–234 (YFQRLAIHKLVPR) are cytoplasmic. Residues 235–255 (AAIVSALLPIGPLGQGGFGLM) traverse the membrane as a helical segment. At 256-277 (QLGVVAKRVFPRLDFLAPIAGD) the chain is on the extracellular side. The helical transmembrane segment at 278 to 298 (IFYVMGAFIAMIMWGFGLIWL) threads the bilayer. The Cytoplasmic portion of the chain corresponds to 299–309 (WFALASFTRGK). A helical membrane pass occupies residues 310–330 (FYFNIGWWAFTFPLGVFTTAT). Topologically, residues 331–343 (TQMGKEFNSPFFD) are extracellular. The helical transmembrane segment at 344 to 364 (ILGTFFSIVVTCMWVLVFALT) threads the bilayer. Over 365–375 (VYKSCTKELFR) the chain is Cytoplasmic.

It belongs to the tellurite-resistance/dicarboxylate transporter (TDT) family.

Its subcellular location is the cell membrane. In terms of biological role, sulphite efflux pump required for the secretion of sulphite as a reducing agent. In the presence of sulphite, cystine in keratin is directly cleaved to cysteine and S-sulphocysteine, and thereby, reduced proteins become accessible to hydrolysis by a variety of secreted endo- and exoproteases. Excretion of sulphite mediated by an efflux pump also represents a detoxification pathway for dermatophytes during infection of the epidermal stratum corneum, hair and nails, which are rich in cysteine. This Trichophyton rubrum (Athlete's foot fungus) protein is Sulfite efflux pump SSU1 (SSU1).